The following is a 175-amino-acid chain: 19.0 kDa class II heat shock protein (175 aa).

A sHSP domain is found at 42–165; the sequence is DRRAMANTPM…KPRVVEVKVA (124 aa). The tract at residues 145–175 is disordered; sequence TVDKKPPPEPKKPRVVEVKVAGAGEPKGKGK. The segment covering 146-161 has biased composition (basic and acidic residues); that stretch reads VDKKPPPEPKKPRVVE.

The protein belongs to the small heat shock protein (HSP20) family. In terms of assembly, may form oligomeric structures.

It localises to the cytoplasm. This is 19.0 kDa class II heat shock protein (HSP19.0) from Oryza sativa subsp. japonica (Rice).